We begin with the raw amino-acid sequence, 415 residues long: Succinate--CoA ligase [GDP-forming] subunit beta, mitochondrial (415 aa).

The N-terminal 19 residues, 1 to 19, are a transit peptide targeting the mitochondrion; it reads MLRAAGNLSKSMMKSQRRF. Positions 28–258 constitute an ATP-grasp domain; that stretch reads KEILEKHGCS…SAAYRQKEIF (231 aa). GTP contacts are provided by residues Gln39, 72–74, and Val130; that span reads GRG. The Mg(2+) site is built by Asn227 and Asp241. Substrate-binding positions include Asn292 and 349–351; that span reads GIV.

This sequence belongs to the succinate/malate CoA ligase beta subunit family. GTP-specific subunit beta subfamily. As to quaternary structure, heterodimer of an alpha and a beta subunit. The beta subunit determines specificity for GTP. It depends on Mg(2+) as a cofactor.

The protein resides in the mitochondrion. It carries out the reaction GTP + succinate + CoA = succinyl-CoA + GDP + phosphate. It participates in carbohydrate metabolism; tricarboxylic acid cycle; succinate from succinyl-CoA (ligase route): step 1/1. Functionally, GTP-specific succinyl-CoA synthetase functions in the citric acid cycle (TCA), coupling the hydrolysis of succinyl-CoA to the synthesis of GTP and thus represents the only step of substrate-level phosphorylation in the TCA. The beta subunit provides nucleotide specificity of the enzyme and binds the substrate succinate, while the binding sites for coenzyme A and phosphate are found in the alpha subunit. This chain is Succinate--CoA ligase [GDP-forming] subunit beta, mitochondrial, found in Caenorhabditis elegans.